The following is a 305-amino-acid chain: Protoheme IX farnesyltransferase 2 (305 aa).

A run of 8 helical transmembrane segments spans residues 31–51 (VVML…ETWI), 53–73 (WKIL…AAVI), 103–123 (ALVF…LWVN), 125–145 (LTAL…TMYL), 152–172 (NIVI…TAVT), 179–199 (ALLL…ALAI), 231–251 (VLLA…AIYL), and 277–297 (AMKT…VLLV).

The protein belongs to the UbiA prenyltransferase family. Protoheme IX farnesyltransferase subfamily.

It is found in the cell inner membrane. It catalyses the reaction heme b + (2E,6E)-farnesyl diphosphate + H2O = Fe(II)-heme o + diphosphate. The protein operates within porphyrin-containing compound metabolism; heme O biosynthesis; heme O from protoheme: step 1/1. Its function is as follows. Converts heme B (protoheme IX) to heme O by substitution of the vinyl group on carbon 2 of heme B porphyrin ring with a hydroxyethyl farnesyl side group. In Pseudoalteromonas atlantica (strain T6c / ATCC BAA-1087), this protein is Protoheme IX farnesyltransferase 2.